The sequence spans 348 residues: Phosphate acyltransferase (348 aa).

This sequence belongs to the PlsX family. As to quaternary structure, homodimer. Probably interacts with PlsY.

Its subcellular location is the cytoplasm. The enzyme catalyses a fatty acyl-[ACP] + phosphate = an acyl phosphate + holo-[ACP]. The protein operates within lipid metabolism; phospholipid metabolism. Functionally, catalyzes the reversible formation of acyl-phosphate (acyl-PO(4)) from acyl-[acyl-carrier-protein] (acyl-ACP). This enzyme utilizes acyl-ACP as fatty acyl donor, but not acyl-CoA. In Pectobacterium carotovorum subsp. carotovorum (strain PC1), this protein is Phosphate acyltransferase.